A 593-amino-acid chain; its full sequence is NADH-quinone oxidoreductase subunit C/D (593 aa).

The tract at residues 1-184 is NADH dehydrogenase I subunit C; it reads MTADNAIFIP…DPYSLTLAKQ (184 aa). The tract at residues 208–593 is NADH dehydrogenase I subunit D; the sequence is DYMFLNLGPN…IDFVMADVDR (386 aa).

It in the N-terminal section; belongs to the complex I 30 kDa subunit family. This sequence in the C-terminal section; belongs to the complex I 49 kDa subunit family. As to quaternary structure, NDH-1 is composed of 13 different subunits. Subunits NuoB, CD, E, F, and G constitute the peripheral sector of the complex.

It localises to the cell inner membrane. The catalysed reaction is a quinone + NADH + 5 H(+)(in) = a quinol + NAD(+) + 4 H(+)(out). NDH-1 shuttles electrons from NADH, via FMN and iron-sulfur (Fe-S) centers, to quinones in the respiratory chain. The immediate electron acceptor for the enzyme in this species is believed to be ubiquinone. Couples the redox reaction to proton translocation (for every two electrons transferred, four hydrogen ions are translocated across the cytoplasmic membrane), and thus conserves the redox energy in a proton gradient. The protein is NADH-quinone oxidoreductase subunit C/D of Pseudomonas putida (strain W619).